The primary structure comprises 718 residues: Telomeric repeat-binding factor 2 (718 aa).

Disordered stretches follow at residues 1–22 (MAAK…RSDD) and 219–286 (NSER…GAPE). 2 stretches are compositionally biased toward basic and acidic residues: residues 8 to 22 (AAME…RSDD) and 219 to 228 (NSERAEEPKR). The segment at 24-220 (EQAVNRWVLQ…LVTMMKSLNS (197 aa)) is TRFH dimerization. Tandem repeats lie at residues 257-269 (GTLR…GGVA), 270-282 (GAPS…KDPT), 283-295 (GAPE…KDAV), 296-308 (RAPC…EDSQ), 309-321 (GTPR…RDVM), 322-334 (GAPS…KDLL), 335-347 (GAPK…RDVV), 348-360 (RAPS…KDPV), 361-373 (GTPG…RDVA), 374-386 (RAPS…KNLP), 387-399 (GAPE…KNTV), 400-412 (RAPS…KDLV), 413-425 (RAPK…RDVV), 426-438 (RAPS…KDTA), and 439-451 (GASE…SYPT). Residues 257–451 (GTLRRAETAG…EPMKSASYPT (195 aa)) form a 15 X 13 AA approximate tandem repeats region. 2 disordered regions span residues 342–455 (TARD…ASQP) and 524–641 (FNKL…WSDE). Basic and acidic residues predominate over residues 405-425 (AERRKDLVRAPKRAETARDVV). Over residues 533–543 (PSPQQMSPSVS) the composition is skewed to polar residues. The short motif at 545–550 (RTKRRK) is the Nuclear localization signal element. The segment covering 584–595 (SQCSKSSESPDS) has biased composition (low complexity). A compositionally biased stretch (polar residues) spans 615-630 (PVSTKRSSQQRWNSSY). An HTH myb-type domain is found at 664–717 (KKQKWTVQESEWIKDGVRKYGEGRWKTISEKYPFQNRTSVQIKDRYRTMKKLGI). The segment at residues 688–713 (WKTISEKYPFQNRTSVQIKDRYRTMK) is a DNA-binding region (H-T-H motif).

As to quaternary structure, homodimer. Component of the shelterin complex (telosome). Interacts with TERF2IP/RAP1. Highly expressed in embryo.

The protein resides in the nucleus. Its subcellular location is the chromosome. It is found in the telomere. Binds the telomeric double-stranded 5'-TTAGGG-3' repeat and plays a central role in telomere maintenance and protection against end-to-end fusion of chromosomes. In addition to its telomeric DNA-binding role, required to recruit a number of factors and enzymes required for telomere protection, including the shelterin complex, TERF2IP/RAP1 and DCLRE1B/Apollo. Component of the shelterin complex (telosome) that is involved in the regulation of telomere length and protection. Shelterin associates with arrays of double-stranded 5'-TTAGGG-3' repeats added by telomerase and protects chromosome ends; without its protective activity, telomeres are no longer hidden from the DNA damage surveillance and chromosome ends are inappropriately processed by DNA repair pathways. Together with DCLRE1B/Apollo, plays a key role in telomeric loop (T loop) formation by generating 3' single-stranded overhang at the leading end telomeres: T loops have been proposed to protect chromosome ends from degradation and repair. Required both to recruit DCLRE1B/Apollo to telomeres and activate the exonuclease activity of DCLRE1B/Apollo. Together with DCLRE1B/Apollo, required to control the amount of DNA topoisomerase (TOP1, TOP2A and TOP2B) needed for telomere replication during fork passage and prevent aberrant telomere topology. Recruits TERF2IP/RAP1 to telomeres, thereby participating in to repressing homology-directed repair (HDR), which can affect telomere length. The chain is Telomeric repeat-binding factor 2 (TERF2) from Gallus gallus (Chicken).